An 873-amino-acid polypeptide reads, in one-letter code: Cyanophycin synthetase (873 aa).

The ATP-grasp domain occupies 224-480 (KTILQDAGIP…VAAPVLDMLF (257 aa)). 495–501 (GTNGKTT) lines the ATP pocket.

It in the C-terminal section; belongs to the MurCDEF family. As to quaternary structure, homodimer.

The catalysed reaction is [L-4-(L-arginin-2-N-yl)aspartate](n) + L-aspartate + ATP = [L-4-(L-arginin-2-N-yl)aspartate](n)-L-aspartate + ADP + phosphate + H(+). The enzyme catalyses [L-4-(L-arginin-2-N-yl)aspartate](n)-L-aspartate + L-arginine + ATP = [L-4-(L-arginin-2-N-yl)aspartate](n+1) + ADP + phosphate + H(+). Its function is as follows. Catalyzes the ATP-dependent polymerization of arginine and aspartate to multi-L-arginyl-poly-L-aspartic acid (cyanophycin; a water-insoluble reserve polymer). The polypeptide is Cyanophycin synthetase (cphA) (Synechocystis sp. (strain ATCC 27184 / PCC 6803 / Kazusa)).